Reading from the N-terminus, the 305-residue chain is Carbamate kinase (305 aa).

Belongs to the carbamate kinase family.

The protein resides in the cytoplasm. It catalyses the reaction hydrogencarbonate + NH4(+) + ATP = carbamoyl phosphate + ADP + H2O + H(+). The protein operates within metabolic intermediate metabolism; carbamoyl phosphate degradation; CO(2) and NH(3) from carbamoyl phosphate: step 1/1. The polypeptide is Carbamate kinase (arcC) (Thermoplasma acidophilum (strain ATCC 25905 / DSM 1728 / JCM 9062 / NBRC 15155 / AMRC-C165)).